Reading from the N-terminus, the 399-residue chain is Ubiquitin-like modifier-activating enzyme 5 (399 aa).

ATP-binding residues include glycine 76, aspartate 97, lysine 120, asparagine 143, and asparagine 177. The Zn(2+) site is built by cysteine 219 and cysteine 222. Cysteine 243 (glycyl thioester intermediate) is an active-site residue. Zn(2+) is bound by residues cysteine 296 and cysteine 301.

This sequence belongs to the ubiquitin-activating E1 family. UBA5 subfamily.

In terms of biological role, E1-like enzyme which activates UFM1. This chain is Ubiquitin-like modifier-activating enzyme 5, found in Drosophila mojavensis (Fruit fly).